A 491-amino-acid chain; its full sequence is Glutamate--tRNA ligase (491 aa).

The short motif at 9-19 is the 'HIGH' region element; that stretch reads PSPTGTPHVGL. A 'KMSKS' region motif is present at residues 253-257; that stretch reads KLSKR. Lys-256 lines the ATP pocket.

It belongs to the class-I aminoacyl-tRNA synthetase family. Glutamate--tRNA ligase type 1 subfamily. In terms of assembly, monomer.

Its subcellular location is the cytoplasm. It carries out the reaction tRNA(Glu) + L-glutamate + ATP = L-glutamyl-tRNA(Glu) + AMP + diphosphate. Functionally, catalyzes the attachment of glutamate to tRNA(Glu) in a two-step reaction: glutamate is first activated by ATP to form Glu-AMP and then transferred to the acceptor end of tRNA(Glu). This chain is Glutamate--tRNA ligase, found in Mycolicibacterium gilvum (strain PYR-GCK) (Mycobacterium gilvum (strain PYR-GCK)).